The sequence spans 154 residues: uncharacterized protein (154 aa).

Residues 23–43 form a helical membrane-spanning segment; it reads SAVALVTFAGAALSGVIPAIA.

It localises to the membrane. This is an uncharacterized protein from Mycobacterium tuberculosis (strain CDC 1551 / Oshkosh).